A 287-amino-acid chain; its full sequence is MSDNLKIGLQYLTPKHALTRLAGKLASAKMGWLTTAVIKWFIKQYNVEMSEAKNPDPEAYSTFNNFFVRELEDGARPINDDENVISHPADACVSQFGPITDGQLVQAKGHVYSAQELLGGDAELAEEFIGGEFATLYLSPRDYHRVHMPCDATLRKMVYVPGDLFSVNPLTAENVPNLFARNERVVCIFDTEFGPMAQVLVGATIVGSIETTWADTVTPPTGPAVKTWHYPLSGDDVICFKKGEEMGRFKLGSTVINLFAPNSITFDESMKNGVPTRLGTPFAHIAK.

Active-site charge relay system; for autoendoproteolytic cleavage activity residues include D90, H147, and S253. S253 serves as the catalytic Schiff-base intermediate with substrate; via pyruvic acid; for decarboxylase activity. A Pyruvic acid (Ser); by autocatalysis modification is found at S253.

It belongs to the phosphatidylserine decarboxylase family. PSD-B subfamily. Prokaryotic type I sub-subfamily. Heterodimer of a large membrane-associated beta subunit and a small pyruvoyl-containing alpha subunit. Pyruvate is required as a cofactor. In terms of processing, is synthesized initially as an inactive proenzyme. Formation of the active enzyme involves a self-maturation process in which the active site pyruvoyl group is generated from an internal serine residue via an autocatalytic post-translational modification. Two non-identical subunits are generated from the proenzyme in this reaction, and the pyruvate is formed at the N-terminus of the alpha chain, which is derived from the carboxyl end of the proenzyme. The autoendoproteolytic cleavage occurs by a canonical serine protease mechanism, in which the side chain hydroxyl group of the serine supplies its oxygen atom to form the C-terminus of the beta chain, while the remainder of the serine residue undergoes an oxidative deamination to produce ammonia and the pyruvoyl prosthetic group on the alpha chain. During this reaction, the Ser that is part of the protease active site of the proenzyme becomes the pyruvoyl prosthetic group, which constitutes an essential element of the active site of the mature decarboxylase.

The protein localises to the cell membrane. It catalyses the reaction a 1,2-diacyl-sn-glycero-3-phospho-L-serine + H(+) = a 1,2-diacyl-sn-glycero-3-phosphoethanolamine + CO2. Its pathway is phospholipid metabolism; phosphatidylethanolamine biosynthesis; phosphatidylethanolamine from CDP-diacylglycerol: step 2/2. Functionally, catalyzes the formation of phosphatidylethanolamine (PtdEtn) from phosphatidylserine (PtdSer). This Aliivibrio salmonicida (strain LFI1238) (Vibrio salmonicida (strain LFI1238)) protein is Phosphatidylserine decarboxylase proenzyme.